A 436-amino-acid polypeptide reads, in one-letter code: Coiled-coil domain-containing protein 71 (436 aa).

Residues 95-119 are disordered; it reads ATSLPARAPQTAKSVPTGQTTLLPV. Residues 105-116 are compositionally biased toward polar residues; sequence TAKSVPTGQTTL. Position 129 is a phosphoserine (Ser129). Disordered stretches follow at residues 210–258 and 314–405; these read LRKG…MKGR and ALRG…KVDR. The stretch at 264-334 forms a coiled coil; sequence KTVRGKAPRT…QAKAKAARTK (71 aa). The segment covering 329-340 has biased composition (basic residues); the sequence is KAARTKHKKRPK. The span at 344–359 shows a compositional bias: polar residues; sequence QTRTGRTSLKNSSETV. Residues 373–386 show a composition bias toward basic residues; the sequence is PPKKRARCVPRSKA.

In Rattus norvegicus (Rat), this protein is Coiled-coil domain-containing protein 71 (Ccdc71).